The sequence spans 423 residues: Glycine amidinotransferase, mitochondrial (423 aa).

The transit peptide at 1 to 43 (MLRVRCLRGGSRGAEAVHYIGSRLGGSLTGWVQRTFQSTQAAT) directs the protein to the mitochondrion. Phosphoserine occurs at positions 46 and 49. Asp-170 serves as a coordination point for arginine. Residues Asp-254 and His-303 contribute to the active site. Residues Asp-305, Arg-322, Ser-354, and Ser-355 each contribute to the arginine site. Lys-385 carries the N6-acetyllysine modification. Cys-407 acts as the Amidino-cysteine intermediate in catalysis.

This sequence belongs to the amidinotransferase family. In terms of assembly, homodimer. As to expression, expressed in kidney, brain, gonads, uterus, and embryonic head, chest and abdomen. Maternally expressed in the placenta and yolk sac of embryos.

The protein localises to the mitochondrion inner membrane. It catalyses the reaction L-arginine + glycine = guanidinoacetate + L-ornithine. It carries out the reaction 4-aminobutanoate + L-arginine = 4-guanidinobutanoate + L-ornithine. The enzyme catalyses beta-alanine + L-arginine = 3-guanidinopropanoate + L-ornithine. The catalysed reaction is taurine + L-arginine = taurocyamine + L-ornithine. Its pathway is amine and polyamine biosynthesis; creatine biosynthesis; creatine from L-arginine and glycine: step 1/2. Transamidinase that catalyzes the transfer of the amidino group of L-arginine onto the amino moiety of acceptor metabolites such as glycine, beta-alanine, gamma-aminobutyric acid (GABA) and taurine yielding the corresponding guanidine derivatives. Catalyzes the rate-limiting step of creatine biosynthesis, namely the transfer of the amidino group from L-arginine to glycine to generate guanidinoacetate, which is then methylated by GAMT to form creatine. Provides creatine as a source for ATP generation in tissues with high energy demands, in particular skeletal muscle, heart and brain. The chain is Glycine amidinotransferase, mitochondrial (Gatm) from Mus musculus (Mouse).